A 474-amino-acid polypeptide reads, in one-letter code: 6-phospho-beta-glucosidase AscB (474 aa).

The Proton donor role is filled by Glu180. Glu372 functions as the Nucleophile in the catalytic mechanism.

Belongs to the glycosyl hydrolase 1 family.

It catalyses the reaction 6-phospho-beta-D-glucosyl-(1-&gt;4)-D-glucose + H2O = D-glucose 6-phosphate + D-glucose. Can hydrolyze salicin, cellobiose, and probably arbutin. The sequence is that of 6-phospho-beta-glucosidase AscB (ascB) from Escherichia coli (strain K12).